A 522-amino-acid polypeptide reads, in one-letter code: Ankyrin repeat and death domain-containing protein 1A (522 aa).

ANK repeat units lie at residues 14 to 43 (PLER…NTRA), 47 to 76 (VGRV…AVDE), 90 to 119 (FGMN…KIHC), 123 to 152 (DGLT…DVAL), 158 to 187 (LGRT…DHNV), 191 to 220 (EGNT…DLEE), 224 to 253 (EGLT…TVNA), 257 to 286 (KNLS…CANV), 290 to 319 (QGAS…DVNA), 323 to 352 (RQQT…DLNL), and 356 to 385 (QGKT…FYRW). A Death domain is found at 413-501 (SVLWRLASRY…DLAGWSTMAR (89 aa)).

The sequence is that of Ankyrin repeat and death domain-containing protein 1A (ANKDD1A) from Homo sapiens (Human).